We begin with the raw amino-acid sequence, 1055 residues long: Ephrin type-B receptor 2 (1055 aa).

A signal peptide spans 1–18; the sequence is MALRRLGAALLLLPLLAA. The Extracellular segment spans residues 19 to 543; sequence VEETLMDSTT…QTSIQEKLPL (525 aa). In terms of domain architecture, Eph LBD spans 20–202; the sequence is EETLMDSTTA…FYRKCPRIIQ (183 aa). Disulfide bonds link Cys62-Cys184 and Cys97-Cys107. N-linked (GlcNAc...) asparagine glycans are attached at residues Asn265, Asn336, Asn428, and Asn482. Fibronectin type-III domains are found at residues 324–434 and 435–530; these read IPSA…TNQA and APSA…TMTE. The helical transmembrane segment at 544-564 threads the bilayer; sequence IIGSSAAGLVFLIAVVVIAIV. At 565–1055 the chain is on the cytoplasmic side; the sequence is CNRRGFERAD…KESNDCSCGG (491 aa). A Protein kinase domain is found at 621–884; it reads VKIEQVIGAG…QIVNTLDKMI (264 aa). ATP contacts are provided by residues 627–635 and Lys653; that span reads IGAGEFGEV. Residue Asp746 is the Proton acceptor of the active site. A Glycyl lysine isopeptide (Lys-Gly) (interchain with G-Cter in ubiquitin) cross-link involves residue Lys891. The region spanning 913–977 is the SAM domain; that stretch reads TSFNTVDEWL…LNSIQVMRAQ (65 aa). Residues Ser983 and Val984 each carry the phosphoserine modification. Positions 984 to 986 match the PDZ-binding (in isoform 2) motif; that stretch reads VEG. Residues 990-1055 are disordered; that stretch reads ARRPRATGRT…KESNDCSCGG (66 aa). Positions 991-1002 are enriched in basic residues; that stretch reads RRPRATGRTKRC. The span at 1025 to 1049 shows a compositional bias: basic and acidic residues; sequence KKTDPGRGREIQGIFFKEDSHKESN.

Belongs to the protein kinase superfamily. Tyr protein kinase family. Ephrin receptor subfamily. Heterotetramer upon binding of the ligand. The heterotetramer is composed of an ephrin dimer and a receptor dimer. Interacts (via PDZ-binding motif) with GRIP1 and PICK1 (via PDZ domain). Interacts with ARHGEF15; mediates ARHGEF15 phosphorylation, ubiquitination and degradation by the proteasome. Interacts with AQP1; involved in endolymph production in the inner ear. Interacts with SPSB1 and SPSB4. The phosphorylated form interacts with RASA1 (via SH2 domain 1). Interacts with EFNA5. Interacts with SH2D3C. In terms of processing, autophosphorylated; ligand binding stimulates autophosphorylation on tyrosine residues. Polyubiquitinated; ligand binding stimulates ubiquitination. Ubiquitinated by RNF186 at Lys-891, mainly through 'Lys-27'-linked polyubiquitin chains. Ubiquitinated by CRL2(KLHDC2) E3 ligase complex. Post-translationally, ligand binding induces cleavage by matrix metalloproteinases (MMPs) such as MMP7/MMP9, producing an EphB2/N-terminal fragment (NTF) and a C-terminal long fragment (EphB2-LF). EphB2-LF is further cleaved by MMPs, producing EphB2/CTF1 which is further cleaved by the PS1/gamma-secretase producing EphB2/CTF2. As to expression, brain, heart, lung, kidney, placenta, pancreas, liver and skeletal muscle. Preferentially expressed in fetal brain.

It localises to the cell membrane. The protein resides in the cell projection. It is found in the axon. The protein localises to the dendrite. The enzyme catalyses L-tyrosyl-[protein] + ATP = O-phospho-L-tyrosyl-[protein] + ADP + H(+). Receptor tyrosine kinase which binds promiscuously transmembrane ephrin-B family ligands residing on adjacent cells, leading to contact-dependent bidirectional signaling into neighboring cells. The signaling pathway downstream of the receptor is referred to as forward signaling while the signaling pathway downstream of the ephrin ligand is referred to as reverse signaling. Functions in axon guidance during development. Involved in the guidance of commissural axons, that form a major interhemispheric connection between the 2 temporal lobes of the cerebral cortex. Also involved in guidance of contralateral inner ear efferent growth cones at the midline and of retinal ganglion cell axons to the optic disk. In addition to axon guidance, also regulates dendritic spines development and maturation and stimulates the formation of excitatory synapses. Upon activation by EFNB1, abolishes the ARHGEF15-mediated negative regulation on excitatory synapse formation. Controls other aspects of development including angiogenesis, palate development and in inner ear development through regulation of endolymph production. Forward and reverse signaling through the EFNB2/EPHB2 complex regulate movement and adhesion of cells that tubularize the urethra and septate the cloaca. May function as a tumor suppressor. May be involved in the regulation of platelet activation and blood coagulation. In Homo sapiens (Human), this protein is Ephrin type-B receptor 2 (EPHB2).